We begin with the raw amino-acid sequence, 469 residues long: MSTNEGSLWGGRFADGPSDALAALSKSTHFDWALAPYDIKASKAHARVLHRAGLLTDEQRDGLLAGLDSLGSDVADGSFEPLPTDEDVHGALERGLIDRVGPDLGGRLRAGRSRNDQVATLFRMWLRDAVRRVADGCLEVVNALAVQAAAHPTAIMPGKTHLQAAQPILLAHHLLAHAHPLLRDVDRLADFDDRTAVSPYGSGALAGSSLGLDPDAIAEDLGFASAADNSVDATASRDFAAEAAFVFAQIGVDLSRLAEDIILWSSTEFGYVTLHDAWSTGSSIMPQKKNPDIAELARGKSGRLIGNLTGLLATLKAQPLAYNRDLQEDKEPVFDSVAQLELLLPAMAGLVGTLTFDEERMAELAPAGYTLATDIAEWLVRQGVPFRIAHEAAGAAVKVAEGRGVGLDALTDDEFASINPALTPDVREVLTVEGSVNARNARGGTAPTQVAKQLGVVRKAMEELRIRLS.

It belongs to the lyase 1 family. Argininosuccinate lyase subfamily.

Its subcellular location is the cytoplasm. It catalyses the reaction 2-(N(omega)-L-arginino)succinate = fumarate + L-arginine. It participates in amino-acid biosynthesis; L-arginine biosynthesis; L-arginine from L-ornithine and carbamoyl phosphate: step 3/3. The polypeptide is Argininosuccinate lyase (Mycolicibacterium smegmatis (strain ATCC 700084 / mc(2)155) (Mycobacterium smegmatis)).